Consider the following 3284-residue polypeptide: Location of vulva defective 1 (3284 aa).

Residues 1-21 (MKKSNFFVLLLLAISAIQIDG) form the signal peptide. Disordered regions lie at residues 226–326 (ESTS…ITST), 350–505 (TTML…GTNP), 623–702 (VASS…ADST), 827–926 (STSE…ASTE), and 1043–1216 (TTTE…SLAT). Composition is skewed to low complexity over residues 227-326 (STST…ITST) and 350-500 (TTML…TTSS). Low complexity predominate over residues 827–913 (STSEVTSTTS…PSDSSSASDS (87 aa)). The span at 914 to 926 (MRTTTVDPDASTE) shows a compositional bias: polar residues. Over residues 1043–1057 (TTTETPPTTVSSSDD) the composition is skewed to low complexity. The span at 1060-1078 (GKTGGTGATGGTGGTGSGG) shows a compositional bias: gly residues. Over residues 1079-1104 (SATTLSTGDAVRSTTSGSGSGQSSTG) the composition is skewed to low complexity. Over residues 1105–1127 (SGAGGSGTTASGSGSGGSSGTGS) the composition is skewed to gly residues. The span at 1128-1138 (DGVNSGKTTAL) shows a compositional bias: polar residues. Positions 1163–1192 (GSGSDSNGSSGVSTKSSSGSDTSGSSDSSG) are enriched in low complexity. The segment covering 1197-1216 (FSATAQPSTRTTKTRSSLAT) has biased composition (polar residues). Residues 2064 to 2227 (WNNSLQVEII…SVGAFNPTID (164 aa)) form the GAIN-B domain. Cysteine 2181 and cysteine 2209 form a disulfide bridge. Residues 2181–2227 (CYFYQKTSDVFNSEGMYPSDGQGMQFVNCSTDHLTMFSVGAFNPTID) are GPS. A helical transmembrane segment spans residues 2245–2265 (VMIAAVFMLVVYGCLTINAII). The PLAT domain occupies 2288 to 2411 (YMYVIAVETG…GDGETERLAR (124 aa)). The next 10 helical transmembrane spans lie at 2453–2473 (DYSV…ITIL), 2496–2516 (IAFG…HILL), 2557–2577 (IIVF…MSLM), 2592–2612 (LILW…FLIL), 2672–2692 (LFIT…MVML), 2945–2965 (MLYI…YLYG), 2994–3014 (WNFM…AYTI), 3043–3063 (WEIV…CKMI), 3089–3109 (FGIA…AVLG), and 3144–3164 (FAFV…LQLY).

It belongs to the polycystin family. Interacts (via PLAT domain) with atp-2 (via N-terminus) and with kin-10 (via C-terminus). Interacts (via C-terminus) with isoform a of stam-1/pqn-19 (via C-terminus). Post-translationally, autoproteolytically processed at the GPS region of the GAIN-B domain; this cleavage modulates receptor activity. Exclusively expressed in a subset of three categories of adult male sensory neurons: ray neurons, hook neurons and head cephalic (CEM) neurons.

It localises to the membrane. The protein resides in the cell projection. The protein localises to the cilium. Functionally, required for two aspects of male mating behavior: response to hermaphrodite contact and vulva location. Acts in the same pathway as pkd-2 and atp-2 in response behavior. May be required for ciliary targeting of pkd-2. The polypeptide is Location of vulva defective 1 (lov-1) (Caenorhabditis elegans).